Reading from the N-terminus, the 273-residue chain is MSNPVVLNLHLISDSTCETVAAVARSALEHFKSVEVNEFVWSCINSYEQIDKIMLTIEKDKYNFIMYTMFDDDIRKYLKQKAGIHEIPCIPILSHVIREISCYLNIKKDPYINTSIGLDDEYFTRIDAINYTIAHDDGQNLWDIDQADIIILGVSRTSKSPTSIYLAYRGYRVVNIPLINSIELSVDLSKMKNKLIVGLTIDIDRLIEIRRARLVSMKNQNNYGYVDYEHVLMEIRETKRICAKNGWPIIDVTQKSVEEIAATIIQYFTKMQH.

Residue 153–160 (GVSRTSKS) coordinates ADP.

The protein belongs to the pyruvate, phosphate/water dikinase regulatory protein family. PDRP subfamily.

The enzyme catalyses N(tele)-phospho-L-histidyl/L-threonyl-[pyruvate, phosphate dikinase] + ADP = N(tele)-phospho-L-histidyl/O-phospho-L-threonyl-[pyruvate, phosphate dikinase] + AMP + H(+). The catalysed reaction is N(tele)-phospho-L-histidyl/O-phospho-L-threonyl-[pyruvate, phosphate dikinase] + phosphate + H(+) = N(tele)-phospho-L-histidyl/L-threonyl-[pyruvate, phosphate dikinase] + diphosphate. Functionally, bifunctional serine/threonine kinase and phosphorylase involved in the regulation of the pyruvate, phosphate dikinase (PPDK) by catalyzing its phosphorylation/dephosphorylation. This is Putative pyruvate, phosphate dikinase regulatory protein from Ehrlichia ruminantium (strain Gardel).